The chain runs to 125 residues: Succinate dehydrogenase hydrophobic membrane anchor subunit (125 aa).

Residues 1–24 are Cytoplasmic-facing; it reads MTYDFRAEIVKAKNTGSAKSGSHH. A helical transmembrane segment spans residues 25-45; that stretch reads WLLQRITAIILVLCSLWLLYF. Over 46–67 the chain is Periplasmic; the sequence is TLANKNSDVNIIIWELKRPINL. Residues 68-89 traverse the membrane as a helical segment; that stretch reads IPLLIAVITSLYHAMLGMQVVI. Residue histidine 80 participates in heme binding. Residues 90 to 99 lie on the Cytoplasmic side of the membrane; sequence EDYISCNKLR. Tyrosine 92 contributes to the a ubiquinone binding site. The chain crosses the membrane as a helical span at residues 100–123; that stretch reads NTLIIAVKLFSILTIVAFIVAVFY.

As to quaternary structure, part of an enzyme complex containing four subunits: a flavoprotein, an iron-sulfur protein, plus two membrane-anchoring proteins, SdhC and SdhD. The cofactor is heme.

It localises to the cell inner membrane. It functions in the pathway carbohydrate metabolism; tricarboxylic acid cycle. Membrane-anchoring subunit of succinate dehydrogenase (SDH). This is Succinate dehydrogenase hydrophobic membrane anchor subunit (sdhD) from Rickettsia bellii (strain RML369-C).